A 318-amino-acid chain; its full sequence is Adenylate isopentenyltransferase 4 (318 aa).

Residue 12–19 (GATGSGKS) coordinates ATP.

This sequence belongs to the IPP transferase family. Mg(2+) serves as cofactor. As to expression, expressed in immature seeds with highest expression in the chalazal endosperm.

Its subcellular location is the cytoplasm. The enzyme catalyses dimethylallyl diphosphate + ADP = N(6)-(dimethylallyl)adenosine 5'-diphosphate + diphosphate. The catalysed reaction is dimethylallyl diphosphate + ATP = N(6)-(dimethylallyl)adenosine 5'-triphosphate + diphosphate. Its function is as follows. Involved in cytokinin biosynthesis. Catalyzes the transfer of an isopentenyl group from dimethylallyl diphosphate (DMAPP) to ATP and ADP, but not to AMP. Has no DMAPP:tRNA isopentenyltransferase activity. The protein is Adenylate isopentenyltransferase 4 (IPT4) of Arabidopsis thaliana (Mouse-ear cress).